Here is a 49-residue protein sequence, read N- to C-terminus: Astexin-2 (49 aa).

A propeptide spanning residues 1–25 (MTKRTTIAARRVGLIDLGKATRQTK) is cleaved from the precursor. Positions 26–34 (GLTQIQALD) form a cross-link, isoaspartyl glycine isopeptide (Gly-Asp).

This lasso peptide is hydrolyzed to a linear form by the isopeptidase AtxE2, in vitro. The isopeptidase AtxE2 only recognizes the threaded form (but not the unthreaded form).

It is found in the cytoplasm. The protein resides in the secreted. Shows weak antimicrobial activity against its phylogenetic relative Caulobacter crescentus. Does not show activity against other bacteria tested (E.coli, Vibrio sp, Burkhoderia thailandensis, and Salmonella newport). The sequence is that of Astexin-2 from Asticcacaulis excentricus (strain ATCC 15261 / DSM 4724 / KCTC 12464 / NCIMB 9791 / VKM B-1370 / CB 48).